Reading from the N-terminus, the 484-residue chain is UDP-glucose:undecaprenyl-phosphate glucose-1-phosphate transferase (484 aa).

5 consecutive transmembrane segments (helical) span residues 37 to 57 (MVVA…VPAA), 59 to 79 (YRVA…LFPL), 93 to 113 (VVLG…ALIV), 122 to 142 (GWVG…RTLL), and 299 to 319 (ILAV…AVGV).

This sequence belongs to the bacterial sugar transferase family.

It is found in the cell inner membrane. The catalysed reaction is di-trans,octa-cis-undecaprenyl phosphate + UDP-alpha-D-glucose = alpha-D-glucosyl di-trans,octa-cis-undecaprenyl diphosphate + UMP. Its pathway is glycan biosynthesis; xanthan biosynthesis. Is the initiating enzyme for the synthesis of the exopolysaccharide xanthan. Catalyzes the transfer of the glucose-1-phosphate moiety from UDP-Glc onto the carrier lipid undecaprenyl phosphate (C55-P), forming a phosphoanhydride bond yielding to glucosyl-pyrophosphoryl-undecaprenol (Glc-PP-C55). The protein is UDP-glucose:undecaprenyl-phosphate glucose-1-phosphate transferase (gumD) of Xanthomonas campestris pv. campestris.